The following is a 604-amino-acid chain: Linalool synthase Tps-5073L4, chloroplastic (604 aa).

A chloroplast-targeting transit peptide spans Met-1 to Ser-36. (2E)-geranyl diphosphate is bound by residues Arg-323, Asp-360, Asp-364, Arg-501, and Asp-504. Residues Asp-360 and Asp-364 each contribute to the Mg(2+) site. The short motif at Asp-360–Asp-364 is the DDXXD motif element. Positions 504, 508, and 512 each coordinate Mg(2+).

The protein belongs to the terpene synthase family. Tpsb subfamily. As to quaternary structure, monomer. Requires Mg(2+) as cofactor. The cofactor is Mn(2+).

It is found in the plastid. The protein resides in the chloroplast. The enzyme catalyses (2E)-geranyl diphosphate + H2O = linalool + diphosphate. It functions in the pathway secondary metabolite biosynthesis; terpenoid biosynthesis. Its function is as follows. Monoterpene synthase (mono-TPS) involved in the biosynthesis of monoterpenes natural products. Catalyzes the conversion of (2E)-geranyl diphosphate (GPP) into linalool. This chain is Linalool synthase Tps-5073L4, chloroplastic, found in Perilla frutescens (Beefsteak mint).